The primary structure comprises 289 residues: Protein SET (289 aa).

The interval 1 to 45 (MAPKRQSAILPQPKKPRPAAAPKLEDKSASPGLPKGEKEQQEAIE) is disordered. A2 carries the n,N,N-trimethylalanine; by NTM1 modification. S7 is subject to Phosphoserine. P11 carries the N6-acetyllysine modification. A Phosphoserine modification is found at K15. Position 23 is an N6-acetyllysine (K23). K23 carries the phosphothreonine modification. At S28 the chain carries Phosphoserine. The dimerization stretch occupies residues 31–77 (PGLPKGEKEQQEAIEHIDEVQNEIDRLNEQASEEILKVEQKYNKLRQ). Basic and acidic residues predominate over residues 35–45 (KGEKEQQEAIE). Residue S62 is modified to Phosphoserine. K67 is subject to N6-acetyllysine. The earmuff domain stretch occupies residues 78 to 224 (PFFQKRSELI…ELGEVIKDDI (147 aa)). Residue Y145 is modified to Phosphotyrosine. K149 is subject to N6-acetyllysine. Residue K153 forms a Glycyl lysine isopeptide (Lys-Gly) (interchain with G-Cter in ubiquitin) linkage. 2 disordered regions span residues 157-206 (LNES…TWFT) and 235-289 (PDMD…GEDD). Positions 168 to 180 (TEIKWKSGKDLTK) are enriched in basic and acidic residues. K171 bears the N6-acetyllysine mark. Residues 236–289 (DMDDEEGEAEDDDDDDEEEEGLEDIDEEGDEDEGEEDDDEDEGEEGEEDEGEDD) are compositionally biased toward acidic residues.

Belongs to the nucleosome assembly protein (NAP) family. In terms of assembly, headphone-shaped homodimer. Isoform 1 and isoform 2 interact directly with each other and with ANP32A within the tripartite INHAT (inhibitor of acetyltransferases) complex. Isoform 1 and isoform 2 interact also with histones. Isoform 2 is a omponent of the SET complex, composed of at least ANP32A, APEX1, HMGB2, NME1, SET and TREX1, but not NME2 or TREX2. Within this complex, directly interacts with ANP32A, NME1, HMGB2 and TREX1; the interaction with ANP32A is enhanced after cleavage. Interacts with APBB1, CHTOP, SETBP1, SGO1. In terms of processing, some glutamate residues are glycylated by TTLL8. This modification occurs exclusively on glutamate residues and results in a glycine chain on the gamma-carboxyl group. N-terminus of isoform 1 is methylated by METTL11A/NTM1. Mainly trimethylated. Post-translationally, cleaved after Lys-176 by GZMA. The cleavage inhibits its nucleosome assembly activity and disrupts the inhibition on NME1.

It is found in the cytoplasm. The protein localises to the cytosol. The protein resides in the endoplasmic reticulum. Its subcellular location is the nucleus. It localises to the nucleoplasm. Its function is as follows. Multitasking protein, involved in apoptosis, transcription, nucleosome assembly and histone chaperoning. Isoform 2 anti-apoptotic activity is mediated by inhibition of the GZMA-activated DNase, NME1. In the course of cytotoxic T-lymphocyte (CTL)-induced apoptosis, GZMA cleaves SET, disrupting its binding to NME1 and releasing NME1 inhibition. Isoform 1 and isoform 2 are potent inhibitors of protein phosphatase 2A. Isoform 1 and isoform 2 inhibit EP300/CREBBP and PCAF-mediated acetylation of histones (HAT) and nucleosomes, most probably by masking the accessibility of lysines of histones to the acetylases. The predominant target for inhibition is histone H4. HAT inhibition leads to silencing of HAT-dependent transcription and prevents active demethylation of DNA. Both isoforms stimulate DNA replication of the adenovirus genome complexed with viral core proteins; however, isoform 2 specific activity is higher. The protein is Protein SET (Set) of Mus musculus (Mouse).